We begin with the raw amino-acid sequence, 220 residues long: Probable L-serine dehydratase, beta chain (220 aa).

The 73-residue stretch at 148–220 (AILVVHNDKF…NIIQVTKIAD (73 aa)) folds into the ACT domain.

Belongs to the iron-sulfur dependent L-serine dehydratase family. As to quaternary structure, heterodimer of an alpha chain and a beta chain. The cofactor is [4Fe-4S] cluster.

The enzyme catalyses L-serine = pyruvate + NH4(+). Its pathway is carbohydrate biosynthesis; gluconeogenesis. In Bacillus subtilis (strain 168), this protein is Probable L-serine dehydratase, beta chain (sdaAB).